The primary structure comprises 417 residues: L-rhamnose isomerase (417 aa).

Positions 261, 293, and 295 each coordinate Mn(2+).

Belongs to the rhamnose isomerase family. The cofactor is Mn(2+).

The protein resides in the cytoplasm. It carries out the reaction L-rhamnopyranose = L-rhamnulose. Its pathway is carbohydrate degradation; L-rhamnose degradation; glycerone phosphate from L-rhamnose: step 1/3. In terms of biological role, catalyzes the interconversion of L-rhamnose and L-rhamnulose. This is L-rhamnose isomerase from Oceanobacillus iheyensis (strain DSM 14371 / CIP 107618 / JCM 11309 / KCTC 3954 / HTE831).